The chain runs to 388 residues: 1-deoxy-D-xylulose 5-phosphate reductoisomerase (388 aa).

NADPH is bound by residues Thr15, Gly16, Ser17, Ile18, and Asn127. Lys128 serves as a coordination point for 1-deoxy-D-xylulose 5-phosphate. NADPH is bound at residue Glu129. Asp153 contacts Mn(2+). Positions 154, 155, 179, and 202 each coordinate 1-deoxy-D-xylulose 5-phosphate. Glu155 is a Mn(2+) binding site. Gly208 contributes to the NADPH binding site. Residues Ser215, Asn220, Lys221, and Glu224 each contribute to the 1-deoxy-D-xylulose 5-phosphate site. Residue Glu224 coordinates Mn(2+).

It belongs to the DXR family. Mg(2+) is required as a cofactor. Mn(2+) serves as cofactor.

The catalysed reaction is 2-C-methyl-D-erythritol 4-phosphate + NADP(+) = 1-deoxy-D-xylulose 5-phosphate + NADPH + H(+). The protein operates within isoprenoid biosynthesis; isopentenyl diphosphate biosynthesis via DXP pathway; isopentenyl diphosphate from 1-deoxy-D-xylulose 5-phosphate: step 1/6. Its function is as follows. Catalyzes the NADPH-dependent rearrangement and reduction of 1-deoxy-D-xylulose-5-phosphate (DXP) to 2-C-methyl-D-erythritol 4-phosphate (MEP). The polypeptide is 1-deoxy-D-xylulose 5-phosphate reductoisomerase (Bacteroides fragilis (strain YCH46)).